Here is a 226-residue protein sequence, read N- to C-terminus: Urease accessory protein UreF (226 aa).

This sequence belongs to the UreF family. As to quaternary structure, ureD, UreF and UreG form a complex that acts as a GTP-hydrolysis-dependent molecular chaperone, activating the urease apoprotein by helping to assemble the nickel containing metallocenter of UreC. The UreE protein probably delivers the nickel.

Its subcellular location is the cytoplasm. Functionally, required for maturation of urease via the functional incorporation of the urease nickel metallocenter. In Burkholderia ambifaria (strain ATCC BAA-244 / DSM 16087 / CCUG 44356 / LMG 19182 / AMMD) (Burkholderia cepacia (strain AMMD)), this protein is Urease accessory protein UreF.